A 183-amino-acid polypeptide reads, in one-letter code: ATP-dependent protease subunit HslV (183 aa).

The active site involves Thr-13. Na(+)-binding residues include Gly-168, Cys-171, and Thr-174.

It belongs to the peptidase T1B family. HslV subfamily. A double ring-shaped homohexamer of HslV is capped on each side by a ring-shaped HslU homohexamer. The assembly of the HslU/HslV complex is dependent on binding of ATP.

Its subcellular location is the cytoplasm. It catalyses the reaction ATP-dependent cleavage of peptide bonds with broad specificity.. With respect to regulation, allosterically activated by HslU binding. In terms of biological role, protease subunit of a proteasome-like degradation complex believed to be a general protein degrading machinery. In Xanthomonas axonopodis pv. citri (strain 306), this protein is ATP-dependent protease subunit HslV.